Consider the following 160-residue polypeptide: Transcriptional repressor NrdR (160 aa).

A zinc finger lies at 3–34 (CPYCQYEDTQVKDSRPSEEGTVIRRRRICSVC). The 91-residue stretch at 49–139 (LLVLKKSGRY…VYRDFRNASD (91 aa)) folds into the ATP-cone domain.

The protein belongs to the NrdR family. The cofactor is Zn(2+).

Negatively regulates transcription of bacterial ribonucleotide reductase nrd genes and operons by binding to NrdR-boxes. The chain is Transcriptional repressor NrdR from Bartonella henselae (strain ATCC 49882 / DSM 28221 / CCUG 30454 / Houston 1) (Rochalimaea henselae).